The sequence spans 119 residues: Ribonuclease P protein component (119 aa).

The protein belongs to the RnpA family. In terms of assembly, consists of a catalytic RNA component (M1 or rnpB) and a protein subunit.

The catalysed reaction is Endonucleolytic cleavage of RNA, removing 5'-extranucleotides from tRNA precursor.. RNaseP catalyzes the removal of the 5'-leader sequence from pre-tRNA to produce the mature 5'-terminus. It can also cleave other RNA substrates such as 4.5S RNA. The protein component plays an auxiliary but essential role in vivo by binding to the 5'-leader sequence and broadening the substrate specificity of the ribozyme. This is Ribonuclease P protein component from Chlamydia muridarum (strain MoPn / Nigg).